The sequence spans 215 residues: FGFR1 oncogene partner 2 homolog (215 aa).

Residues 12–186 (AKELVERLRE…REILQITKIS (175 aa)) are a coiled coil. Residues 193–215 (EDASENSPHSAPVPNTDLILRKS) form a disordered region.

It belongs to the SIKE family.

The protein localises to the cytoplasm. This Xenopus laevis (African clawed frog) protein is FGFR1 oncogene partner 2 homolog (fgfr1op2).